A 304-amino-acid polypeptide reads, in one-letter code: Lipoprotein signal peptidase (304 aa).

3 helical membrane-spanning segments follow: residues 28–48 (IKIKYPILAVMGFFVLLIVFV), 86–106 (PAVPYLLQSLLTIIFLITFIF), and 112–132 (LIVLLPLITFGGLANVIDRSV). Active-site residues include Asp-148 and Asp-163. Residues 163-183 (DICIVTGFALIFLTFVVDIFL) form a helical membrane-spanning segment.

Belongs to the peptidase A8 family.

The protein localises to the cell membrane. It catalyses the reaction Release of signal peptides from bacterial membrane prolipoproteins. Hydrolyzes -Xaa-Yaa-Zaa-|-(S,diacylglyceryl)Cys-, in which Xaa is hydrophobic (preferably Leu), and Yaa (Ala or Ser) and Zaa (Gly or Ala) have small, neutral side chains.. Its pathway is protein modification; lipoprotein biosynthesis (signal peptide cleavage). Functionally, this protein specifically catalyzes the removal of signal peptides from prolipoproteins. In Mycoplasmoides gallisepticum (strain R(low / passage 15 / clone 2)) (Mycoplasma gallisepticum), this protein is Lipoprotein signal peptidase.